Here is a 716-residue protein sequence, read N- to C-terminus: Polyribonucleotide nucleotidyltransferase (716 aa).

Mg(2+) is bound by residues Asp486 and Asp492. The region spanning 553–612 (PHIYNIKINPEKIKDVIGKGGAVIRALSDETDTKIDISDDGNITIAALSQKSAAFAQQRI) is the KH domain. One can recognise an S1 motif domain in the interval 622–690 (GRIYQGTVTR…RQGRIRLSIK (69 aa)).

Belongs to the polyribonucleotide nucleotidyltransferase family. In terms of assembly, component of the RNA degradosome, which is a multiprotein complex involved in RNA processing and mRNA degradation. Mg(2+) is required as a cofactor.

Its subcellular location is the cytoplasm. It carries out the reaction RNA(n+1) + phosphate = RNA(n) + a ribonucleoside 5'-diphosphate. Functionally, involved in mRNA degradation. Catalyzes the phosphorolysis of single-stranded polyribonucleotides processively in the 3'- to 5'-direction. This Hamiltonella defensa subsp. Acyrthosiphon pisum (strain 5AT) protein is Polyribonucleotide nucleotidyltransferase.